An 817-amino-acid chain; its full sequence is Leucine--tRNA ligase (817 aa).

Residues 42-52 (PYPSGRLHMGH) carry the 'HIGH' region motif. Positions 576–580 (KMSKS) match the 'KMSKS' region motif. Lys579 provides a ligand contact to ATP.

Belongs to the class-I aminoacyl-tRNA synthetase family.

The protein localises to the cytoplasm. The catalysed reaction is tRNA(Leu) + L-leucine + ATP = L-leucyl-tRNA(Leu) + AMP + diphosphate. The sequence is that of Leucine--tRNA ligase from Halorhodospira halophila (strain DSM 244 / SL1) (Ectothiorhodospira halophila (strain DSM 244 / SL1)).